A 107-amino-acid polypeptide reads, in one-letter code: Urease subunit beta (107 aa).

It belongs to the urease beta subunit family. As to quaternary structure, heterotrimer of UreA (gamma), UreB (beta) and UreC (alpha) subunits. Three heterotrimers associate to form the active enzyme.

It localises to the cytoplasm. The catalysed reaction is urea + 2 H2O + H(+) = hydrogencarbonate + 2 NH4(+). It participates in nitrogen metabolism; urea degradation; CO(2) and NH(3) from urea (urease route): step 1/1. In Teredinibacter turnerae (strain ATCC 39867 / T7901), this protein is Urease subunit beta.